A 509-amino-acid chain; its full sequence is Transcription factor atf-7 (509 aa).

The segment covering 283–303 (TVSSYHSPLGASSQPPSTQKS) has biased composition (polar residues). Disordered stretches follow at residues 283 to 318 (TVSSYHSPLGASSQPPSTQKSPADGSWDHINGEKQI) and 337 to 400 (NMSS…ILER). The segment covering 308 to 318 (SWDHINGEKQI) has biased composition (basic and acidic residues). Positions 337-364 (NMSSSGSDQDQSADMSNAGSTASTSTGN) are enriched in low complexity. Residues 390–400 (PDERRNTILER) are compositionally biased toward basic and acidic residues. The bZIP domain occupies 391 to 464 (DERRNTILER…TERESRCVCL (74 aa)). The basic motif stretch occupies residues 393–413 (RRNTILERNKAAAVRYRKRKK). Residues 419–450 (MMGRVQAMEAEKNQLLAIQTQNQVLRRELERV) are leucine-zipper.

This sequence belongs to the bZIP family. In terms of assembly, interacts with serine/threonine kinase pmk-1; perhaps in a manner dependent on dual specificity protein kinase sek-1. As to expression, expressed in intestinal cells.

The protein resides in the nucleus. The protein localises to the chromosome. Its function is as follows. Transcription factor which regulates the transcription of various genes, including those involved in innate immunity and oxidative stress responses. Binds to promoter regions of genes, probably at 5'-[GACGTCA]-3' consensus sequences. Together with transcription factor daf-19, involved in regulation of the serotonergic response of ADF neurons to pathogenic food. Modulates response to infection by the Gram-negative bacterium P.aeruginosa, acting downstream of the p38 signal transduction pathway effector serine/threonine kinase pmk-1. May act with transcription factor elt-2 to control p38 gene induction in response to bacterial infection. May be phosphorylated by pmk-1. Regulates transcription of the metallothionein gene, mtl-1, perhaps acting downstream of pmk-1. The protein is Transcription factor atf-7 of Caenorhabditis elegans.